The sequence spans 143 residues: Hemoglobin subunit alpha-2 (143 aa).

S2 bears the N-acetylserine mark. Residues 2–143 (SLSTKDKDTV…LARALSEKYR (142 aa)) enclose the Globin domain. The heme b site is built by H60 and H89.

Belongs to the globin family. Hb 2 is a heterotetramer of two alpha-2 and two beta chains. As to expression, red blood cells.

Involved in oxygen transport from gills to the various peripheral tissues. The protein is Hemoglobin subunit alpha-2 of Cottoperca gobio (Frogmouth).